The chain runs to 263 residues: Proenkephalin-A (263 aa).

The first 24 residues, 1-24, serve as a signal peptide directing secretion; it reads MARFLGLCTWLLALGPGLLATVRA. Cystine bridges form between Cys-26/Cys-48, Cys-30/Cys-52, and Cys-33/Cys-65. 2 propeptides span residues 192 to 203 and 213 to 223; these read SPHLEDETKELQ and VGRPEWWMDYQ. The residue at position 247 (Ser-247) is a Phosphoserine.

The protein belongs to the opioid neuropeptide precursor family. Post-translationally, proenkephalin-A is cleaved by CTSL to generate Met-enkephalin. Processed and degraded by ACE. In terms of processing, probably cleaved by ACE. Post-translationally, processed by ACE to generate Met-enkephalin in the nucleus accumbens of the brain. The N-terminal domain contains 6 conserved cysteines thought to be involved in disulfide bonding and/or processing. Secreted by neuroendocrine chromaffin cells through cromaffin granules.

The protein localises to the cytoplasmic vesicle. It is found in the secretory vesicle. It localises to the chromaffin granule lumen. Its subcellular location is the secreted. Functionally, neuropeptide that competes with and mimic the effects of opiate drugs. They play a role in a number of physiologic functions, including pain perception and responses to stress. Its function is as follows. Met-enkephalin-Arg-Phe neuropeptide acts as a strong ligand of Mu-type opioid receptor OPRM1. Met-enkephalin-Arg-Phe-binding to OPRM1 in the nucleus accumbens of the brain increases activation of OPRM1, leading to long-term synaptic depression of glutamate release. Increases glutamate release in the striatum and decreases GABA concentration in the striatum. In terms of biological role, increases glutamate release in the striatum. Functionally, enkelytin possesses antibacterial activity against Gram-positive bacteria such as Micrococcus luteus and Bacillus megaterium. This chain is Proenkephalin-A (PENK), found in Bos taurus (Bovine).